Consider the following 659-residue polypeptide: Threonine--tRNA ligase (659 aa).

Residues methionine 1–threonine 60 form the TGS domain. The catalytic stretch occupies residues aspartate 252 to proline 552. Positions 349, 400, and 529 each coordinate Zn(2+).

Belongs to the class-II aminoacyl-tRNA synthetase family. Homodimer. The cofactor is Zn(2+).

It is found in the cytoplasm. It catalyses the reaction tRNA(Thr) + L-threonine + ATP = L-threonyl-tRNA(Thr) + AMP + diphosphate + H(+). Its function is as follows. Catalyzes the attachment of threonine to tRNA(Thr) in a two-step reaction: L-threonine is first activated by ATP to form Thr-AMP and then transferred to the acceptor end of tRNA(Thr). Also edits incorrectly charged L-seryl-tRNA(Thr). The chain is Threonine--tRNA ligase from Thermus thermophilus (strain ATCC BAA-163 / DSM 7039 / HB27).